A 148-amino-acid polypeptide reads, in one-letter code: uncharacterized protein (148 aa).

Over residues 1–17 (MEGLQRSTISFRRQGSS) the composition is skewed to polar residues. The disordered stretch occupies residues 1 to 148 (MEGLQRSTIS…SRRRIVTKKR (148 aa)). 2 stretches are compositionally biased toward basic and acidic residues: residues 36–47 (EQKDESQRDEQP) and 58–67 (KPIDEKDKLR). Phosphoserine is present on residues serine 100 and serine 107. The span at 128 to 148 (VNPRKRPPKRRSRRRIVTKKR) shows a compositional bias: basic residues.

This is an uncharacterized protein from Arabidopsis thaliana (Mouse-ear cress).